The sequence spans 1483 residues: MASHKKSEDPLVVKDRQEQECESSDSTIASENASEHRSPMGLIDEDGIETLNRIASQSSRRRSSVYPPNVPTRTSTLATISENDPAVDPQGPSFDLNKWLKMVLRESERQGREAHRTGIVFKNFTVSGTGAALQLQDTVSSMLSAPFRIGEMMKNRHSPPKRILNEFNGLLKSGELLLVLGRPGSGCSTFLKSLCGELHGLSMSKESVIHYDGVPQQRMIKEFKGEVVYNQEVDKHFPHLTVGQTLEFAALARTPAQRIRDMSREEFAKHITQVVMAVFGLSHTYNTKVGNDFVRGVSGGERKRVSIAEMALAHSPLAAWDNSTRGLDSATALKFVEALRLFADLSGSAHAVAIYQASQSIYDIFNKVVVLYEGRQIYYGPAKDAKSYFERQGWECPQRQTTGDFLTSVTNPSERKARPGMENQVPRTAEDFEAYWRKSPEYQKLMSEISHYEQEHPLEEEGDALATFQQKKREIQAKHTRPQSPYLLSVPMQIKLNTKRAYQRVWNDISSTVSTVISQIIMALIIGSVFYGTPDATAGFTAKGATLFFAVLLNALIAMNEINSLYSQRPIVEKHNSYAFYHPATEAIAGVVSDIPVKFVIAVVFNLILYFLAGLHRSAGQFFLYLLVTFIVMFVMSAVFRTMAAITQTVSQAMGLAGILILALIVYTGFVLPVPSMHPWFEWIHYLNPIYYAFEMLIANEFHGRDFICSQFIPAYPNLSGNSFVCSSAGAKAGQRAISGDDYIQVNYQYSYGHVWRNFGILIAFLVGFMMIYFIATELNSSTSSTAEVLVFRRGHEPAYLRTDSKKPDAESAVELSAMKPTTESGEGDMSIIPPQKDIFTWRDVCYDIEIKGEPRRLLDHVSGWVKPGTLTALMGVSGAGKTTLLDVLAHRTSMGVITGDMFVNGRGLDQSFQRSTGYVQQQDLHLETATVRESLRFSALLRQPPNVSIQEKYDYVEDVIRMLKMEDFAEAVVGVPGQGLNVEQRKLLTIGVELAAKPKLLLFLDEPTSGLDSQSSWAICAFLRRLADSGQAVLCTIHQPSAILFQQFDQLLFLARGGKTVYFGPIGQNSNTLLNYFESNGARKCADDENPAEWMLEIVNAGTNSEGENWFDVWKRSSECQGVQTEIDRIHREQQSKTQASDKDNESWSKSEFAMPFWFQLYQVTYRVFQQYWRMPEYIASKWVLGILSGLFIGFSFFQAKSSLQGMQTIVYSLFMLCSIFSSLVQQVMPLFVTQRSLYEVRERPSKTYSWKAFLIANIIVEIPYQIMMGILTYACYYYAVVGVQDSERQGLVLLLCIQFFIYASTFAHMAIAAMPDTETASAIVVLLFAMSLTFCGVMQTPTALPGFWIFMYRVSPFTYWVSAMAATQLHDRVVQCSPSEMSIFDPPSGQTCGEYMSSFMSMAGGQLSNPNATSDCNYCSVAVADDFLSSVNIYWSERWRNFGLMWVYIVFNIFLATMLYYTFRVKKWNLSGLKERFSKKK.

Positions 1-19 (MASHKKSEDPLVVKDRQEQ) are enriched in basic and acidic residues. The tract at residues 1 to 92 (MASHKKSEDP…NDPAVDPQGP (92 aa)) is disordered. The N-linked (GlcNAc...) asparagine glycan is linked to Asn32. The span at 71–82 (PTRTSTLATISE) shows a compositional bias: polar residues. N-linked (GlcNAc...) asparagine glycans are attached at residues Asn123 and Asn322. The ABC transporter 1 domain occupies 147 to 398 (FRIGEMMKNR…FERQGWECPQ (252 aa)). 5 helical membrane passes run 512 to 532 (TVST…VFYG), 539 to 559 (GFTA…LIAM), 595 to 615 (IPVK…LAGL), 620 to 640 (GQFF…SAVF), and 654 to 674 (MGLA…VLPV). An N-linked (GlcNAc...) asparagine glycan is attached at Asn718. A helical membrane pass occupies residues 759–779 (FGILIAFLVGFMMIYFIATEL). Residue Asn780 is glycosylated (N-linked (GlcNAc...) asparagine). An ABC transporter 2 domain is found at 840 to 1083 (FTWRDVCYDI…LLNYFESNGA (244 aa)). 876–883 (GVSGAGKT) provides a ligand contact to ATP. Residues Asn947 and Asn1146 are each glycosylated (N-linked (GlcNAc...) asparagine). The next 5 helical transmembrane spans lie at 1179-1199 (YIAS…FSFF), 1215-1235 (LFML…LFVT), 1254-1274 (AFLI…GILT), 1293-1313 (LVLL…HMAI), and 1320-1340 (ETAS…CGVM). An N-linked (GlcNAc...) asparagine glycan is attached at Asn1413. The helical transmembrane segment at 1444-1464 (FGLMWVYIVFNIFLATMLYYT) threads the bilayer. The N-linked (GlcNAc...) asparagine glycan is linked to Asn1471.

The protein belongs to the ABC transporter superfamily. ABCG family. PDR (TC 3.A.1.205) subfamily.

The protein localises to the cell membrane. The enzyme catalyses (R)-miconazole(in) + ATP + H2O = (R)-miconazole(out) + ADP + phosphate + H(+). Its function is as follows. Pleiotropic ABC efflux transporter involved in the basal level of azole susceptibility. Confers resistance to miconazole and clotrimazole. The polypeptide is ABC multidrug transporter atrA (Aspergillus oryzae (strain ATCC 42149 / RIB 40) (Yellow koji mold)).